Consider the following 153-residue polypeptide: ORM1-like protein 2 (153 aa).

Residues 1–21 (MNVGVAHSEVNPNTRVMNSRG) lie on the Cytoplasmic side of the membrane. The next 2 membrane-spanning stretches (helical) occupy residues 22–42 (IWLAYIILVGLLHVVLLSIPF) and 43–63 (FSIPVVWTLTNVIHNLVMYVF). Over 64–105 (LHTVKGTPFETPDQGKARLLTHWEQMDYGLQFTSSRKFLSIS) the chain is Cytoplasmic. The chain crosses the membrane as a helical span at residues 106 to 126 (PIVLYLLASFYTKYDAAHFLI). Topologically, residues 127–153 (NTASLLSVLLPKLPQFHGVRLFGINKY) are extracellular.

Belongs to the ORM family. In terms of assembly, ceramide-sensitive subunit of the serine palmitoyltransferase (SPT) complex, which is also composed of SPTLC1, SPTLC2/3 and SPTSSA/B.

The protein localises to the endoplasmic reticulum membrane. Functionally, plays an essential role in the homeostatic regulation of sphingolipid de novo biosynthesis by modulating the activity of the serine palmitoyltransferase (SPT) in response to ceramide levels. When complexed to SPT, the binding of ceramides to its N-terminus stabilizes a conformation that block SPT substrate entry, hence preventing SPT catalytic activity. Through this mechanism, maintains ceramide levels at sufficient concentrations for the production of complex sphingolipids, but which prevents the accumulation of ceramides to levels that trigger apoptosis. The chain is ORM1-like protein 2 (ORMDL2) from Bos taurus (Bovine).